A 507-amino-acid polypeptide reads, in one-letter code: Histone-lysine N-methyltransferase set-18 (507 aa).

C49, C52, C65, C68, C74, C78, H86, and C90 together coordinate Zn(2+). Residues 49-90 form an MYND-type zinc finger; sequence CANCLRGPAPGEKLLRCGGCNFSMYCSKECQATAWLVHKPEC.

It belongs to the class V-like SAM-binding methyltransferase superfamily. Histone-lysine methyltransferase family. Expressed in pharyngeal and body wall muscles.

The enzyme catalyses L-lysyl(36)-[histone H3] + 2 S-adenosyl-L-methionine = N(6),N(6)-dimethyl-L-lysyl(36)-[histone H3] + 2 S-adenosyl-L-homocysteine + 2 H(+). Functionally, histone methyltransferase. Specifically methylates 'Lys-36' of histone H3, inducing di-methylation. Plays a role in modulating lifespan and oxidative stress resistance, in a manner dependent upon daf-16/Forkhead box protein O and the Insulin/IGF-1-like signaling (IIS) mediated pathway. Represses transcription of daf-16 isoform a, perhaps by methylating histone H3 at the daf-16 promoter, which in turn leads to recruitment of histone deacetylases and thus modulation of expression. This chain is Histone-lysine N-methyltransferase set-18, found in Caenorhabditis elegans.